A 133-amino-acid polypeptide reads, in one-letter code: Large ribosomal subunit protein uL22 (133 aa).

Belongs to the universal ribosomal protein uL22 family. As to quaternary structure, part of the 50S ribosomal subunit.

Functionally, this protein binds specifically to 23S rRNA; its binding is stimulated by other ribosomal proteins, e.g. L4, L17, and L20. It is important during the early stages of 50S assembly. It makes multiple contacts with different domains of the 23S rRNA in the assembled 50S subunit and ribosome. Its function is as follows. The globular domain of the protein is located near the polypeptide exit tunnel on the outside of the subunit, while an extended beta-hairpin is found that lines the wall of the exit tunnel in the center of the 70S ribosome. The polypeptide is Large ribosomal subunit protein uL22 (Nocardia farcinica (strain IFM 10152)).